Consider the following 278-residue polypeptide: Large ribosomal subunit protein uL2 (278 aa).

The disordered stretch occupies residues 201–278 (HGNINDGKAG…IMRSRHQKKK (78 aa)). Residues 210–221 (GRSRWRGKRPHV) show a composition bias toward basic residues.

Belongs to the universal ribosomal protein uL2 family. As to quaternary structure, part of the 50S ribosomal subunit. Forms a bridge to the 30S subunit in the 70S ribosome.

One of the primary rRNA binding proteins. Required for association of the 30S and 50S subunits to form the 70S ribosome, for tRNA binding and peptide bond formation. It has been suggested to have peptidyltransferase activity; this is somewhat controversial. Makes several contacts with the 16S rRNA in the 70S ribosome. The polypeptide is Large ribosomal subunit protein uL2 (Allorhizobium ampelinum (strain ATCC BAA-846 / DSM 112012 / S4) (Agrobacterium vitis (strain S4))).